The primary structure comprises 407 residues: Bifunctional enzyme IspD/IspF (407 aa).

The tract at residues 1–246 (MTEASENASA…SSERTHFPDI (246 aa)) is 2-C-methyl-D-erythritol 4-phosphate cytidylyltransferase. The interval 247-407 (RTGNGYDVHA…SVVFPGEVPE (161 aa)) is 2-C-methyl-D-erythritol 2,4-cyclodiphosphate synthase. D253 and H255 together coordinate a divalent metal cation. 4-CDP-2-C-methyl-D-erythritol 2-phosphate is bound by residues 253–255 (DVH) and 279–280 (HS). H287 contributes to the a divalent metal cation binding site. 4-CDP-2-C-methyl-D-erythritol 2-phosphate-binding positions include 301–303 (DIG), 377–380 (TTNE), F384, and R387.

In the N-terminal section; belongs to the IspD/TarI cytidylyltransferase family. IspD subfamily. The protein in the C-terminal section; belongs to the IspF family. A divalent metal cation serves as cofactor.

It catalyses the reaction 2-C-methyl-D-erythritol 4-phosphate + CTP + H(+) = 4-CDP-2-C-methyl-D-erythritol + diphosphate. The enzyme catalyses 4-CDP-2-C-methyl-D-erythritol 2-phosphate = 2-C-methyl-D-erythritol 2,4-cyclic diphosphate + CMP. Its pathway is isoprenoid biosynthesis; isopentenyl diphosphate biosynthesis via DXP pathway; isopentenyl diphosphate from 1-deoxy-D-xylulose 5-phosphate: step 2/6. The protein operates within isoprenoid biosynthesis; isopentenyl diphosphate biosynthesis via DXP pathway; isopentenyl diphosphate from 1-deoxy-D-xylulose 5-phosphate: step 4/6. Its function is as follows. Bifunctional enzyme that catalyzes the formation of 4-diphosphocytidyl-2-C-methyl-D-erythritol from CTP and 2-C-methyl-D-erythritol 4-phosphate (MEP) (IspD), and catalyzes the conversion of 4-diphosphocytidyl-2-C-methyl-D-erythritol 2-phosphate (CDP-ME2P) to 2-C-methyl-D-erythritol 2,4-cyclodiphosphate (ME-CPP) with a corresponding release of cytidine 5-monophosphate (CMP) (IspF). The sequence is that of Bifunctional enzyme IspD/IspF from Mesorhizobium japonicum (strain LMG 29417 / CECT 9101 / MAFF 303099) (Mesorhizobium loti (strain MAFF 303099)).